The sequence spans 201 residues: Large ribosomal subunit protein uL4 (201 aa).

The tract at residues 44–68 (KAQKTRSEVAGTTKKSKKQKGGGAR) is disordered.

The protein belongs to the universal ribosomal protein uL4 family. In terms of assembly, part of the 50S ribosomal subunit.

In terms of biological role, one of the primary rRNA binding proteins, this protein initially binds near the 5'-end of the 23S rRNA. It is important during the early stages of 50S assembly. It makes multiple contacts with different domains of the 23S rRNA in the assembled 50S subunit and ribosome. Forms part of the polypeptide exit tunnel. The chain is Large ribosomal subunit protein uL4 from Xanthomonas oryzae pv. oryzae (strain MAFF 311018).